A 193-amino-acid chain; its full sequence is Interferon type A1/A2 (193 aa).

The N-terminal stretch at 1 to 31 is a signal peptide; sequence MAVPASPQHPRGYGILLLTLLLKALATTASA. 3 cysteine pairs are disulfide-bonded: cysteine 32-cysteine 129, cysteine 61-cysteine 155, and cysteine 68-cysteine 168. N-linked (GlcNAc...) asparagine glycans are attached at residues asparagine 65, asparagine 71, asparagine 108, and asparagine 186.

The protein belongs to the alpha/beta interferon family.

The protein localises to the secreted. Has antiviral activities. The sequence is that of Interferon type A1/A2 (IFNA1) from Gallus gallus (Chicken).